The sequence spans 425 residues: Enolase (425 aa).

Residue Q163 participates in (2R)-2-phosphoglycerate binding. The active-site Proton donor is the E205. Residues D242, E285, and D312 each coordinate Mg(2+). (2R)-2-phosphoglycerate is bound by residues K337, R366, S367, and K388. K337 functions as the Proton acceptor in the catalytic mechanism.

The protein belongs to the enolase family. Mg(2+) serves as cofactor.

It is found in the cytoplasm. Its subcellular location is the secreted. The protein resides in the cell surface. The enzyme catalyses (2R)-2-phosphoglycerate = phosphoenolpyruvate + H2O. Its pathway is carbohydrate degradation; glycolysis; pyruvate from D-glyceraldehyde 3-phosphate: step 4/5. Its function is as follows. Catalyzes the reversible conversion of 2-phosphoglycerate (2-PG) into phosphoenolpyruvate (PEP). It is essential for the degradation of carbohydrates via glycolysis. In Granulibacter bethesdensis (strain ATCC BAA-1260 / CGDNIH1), this protein is Enolase.